Reading from the N-terminus, the 315-residue chain is Three-prime repair exonuclease 1 (315 aa).

The Mg(2+) site is built by D18 and E20. Residue 20–21 (EA) coordinates substrate. At S78 the chain carries Phosphoserine. Y129 contributes to the substrate binding site. Residue S167 is modified to Phosphoserine. Catalysis depends on H195, which acts as the Proton donor/acceptor. Residue D200 participates in Mg(2+) binding. D200 provides a ligand contact to substrate. The interval 236–315 (TTSTGTNPRP…YGLSLAMPGQ (80 aa)) is necessary for endoplasmic reticulum localization. The segment at 243–315 (PRPSAVTATV…YGLSLAMPGQ (73 aa)) is interaction with UBQLN1. A disordered region spans residues 256–282 (RASDTGPNLRGDRSPKPAPSPKMCPGA). The span at 271 to 282 (KPAPSPKMCPGA) shows a compositional bias: pro residues. The necessary for cytoplasmic retention stretch occupies residues 282–315 (APPGEGLLAPLGLLAFLTLAVAMLYGLSLAMPGQ).

Belongs to the exonuclease superfamily. TREX family. In terms of assembly, homodimer. Interacts (via proline-rich region) with TCERG1/CA150 (via the second WW domain). Component of the SET complex, composed of at least ANP32A, APEX1, HMGB2, NME1, SET and TREX1. Within this complex, directly interacts with SET; this interaction does not result in TREX1 inhibition. Also interacts with NME1, but only following translocation to the nucleus. Directly interacts with UBQLN1 (via ubiquitin-like domain); the interaction may control TREX1 subcellular location. The cofactor is Mg(2+). Post-translationally, ubiquitinated, but not targeted to proteasomal degradation. Ubiquitination may be important for interaction with UBQLN1.

It is found in the nucleus. Its subcellular location is the cytoplasm. The protein resides in the cytosol. It localises to the endoplasmic reticulum membrane. It catalyses the reaction Exonucleolytic cleavage in the 3'- to 5'-direction to yield nucleoside 5'-phosphates.. Functionally, major cellular 3'-to-5' DNA exonuclease which digests single-stranded DNA (ssDNA) and double-stranded DNA (dsDNA) with mismatched 3' termini. Prevents cell-intrinsic initiation of autoimmunity. Acts by metabolizing DNA fragments from endogenous retroelements, including L1, LTR and SINE elements. Plays a key role in degradation of DNA fragments at cytosolic micronuclei arising from genome instability: its association with the endoplasmic reticulum membrane directs TREX1 to ruptured micronuclei, leading to micronuclear DNA degradation. Micronuclear DNA degradation is required to limit CGAS activation and subsequent inflammation. Unless degraded, these DNA fragments accumulate in the cytosol and activate the cGAS-STING innate immune signaling, leading to the production of type I interferon. Prevents chronic ATM-dependent checkpoint activation, by processing ssDNA polynucleotide species arising from the processing of aberrant DNA replication intermediates. Inefficiently degrades oxidized DNA, such as that generated upon antimicrobial reactive oxygen production or upon absorption of UV light. During GZMA-mediated cell death, contributes to DNA damage in concert with NME1. NME1 nicks one strand of DNA and TREX1 removes bases from the free 3' end to enhance DNA damage and prevent DNA end reannealing and rapid repair. The polypeptide is Three-prime repair exonuclease 1 (Bos taurus (Bovine)).